We begin with the raw amino-acid sequence, 328 residues long: MAANIAAAAAAAQEVDPVLKKAIKLLHSSNPTSAAELRLLLDEALKARFGPEKSLTNNMTPRMLEDEANFSGRAATPPQQPINADEIINLTNSPDKEPSDSVDTIADSDDGLSAVGIVNTGDTGDFGDLNCCVCGEMVFTATNRLIECSKCGAMYHQECHKPPITKEEAADDQEQNWQCDTCCNKPTSSGRTTSSAAAVTPTVFIADEPMPLTSKAKSSVASSRSSNSSNSSSPFYRPEPSSSTNASSSSSSKHGHKSSSSSSSKSHKEERSSKSTAASSLSAIGGMEKHNSSGTSSRRSGSSTKSSSKSSSSKHHESGSSSKRRSKQ.

The interval 1–45 is sufficient for binding to IntS1 and IntS9 and for 3'-end snRNA processing; the sequence is MAANIAAAAAAAQEVDPVLKKAIKLLHSSNPTSAAELRLLLDEAL. The segment at 128 to 185 adopts a PHD-type zinc-finger fold; it reads DLNCCVCGEMVFTATNRLIECSKCGAMYHQECHKPPITKEEAADDQEQNWQCDTCCNK. Composition is skewed to low complexity over residues 215 to 233, 241 to 264, 274 to 283, and 292 to 311; these read KAKS…NSSS, SSST…SSSS, KSTAASSLSA, and SSGT…SKSS. The segment at 215-328 is disordered; it reads KAKSSVASSR…GSSSKRRSKQ (114 aa).

This sequence belongs to the Integrator subunit 12 family. Belongs to the multiprotein complex Integrator, at least composed of IntS1, IntS2, IntS3, IntS4, omd/IntS5, IntS6, defl/IntS7, IntS8, IntS9, IntS10, IntS11, IntS12, asun/IntS13, IntS14 and IntS15. The core complex associates with protein phosphatase 2A subunits mts/PP2A and Pp2A-29B, to form the Integrator-PP2A (INTAC) complex. Within the complex, interacts with IntS1 and IntS9. Interaction with IntS1 is likely to be important for promoting 3'-end processing of snRNAs.

The protein localises to the nucleus. Functionally, component of the integrator complex, a multiprotein complex that terminates RNA polymerase II (Pol II) transcription in the promoter-proximal region of genes. The integrator complex provides a quality checkpoint during transcription elongation by driving premature transcription termination of transcripts that are unfavorably configured for transcriptional elongation: the complex terminates transcription by (1) catalyzing dephosphorylation of the C-terminal domain (CTD) of Pol II subunit Polr2A/Rbp1 and Spt5, and (2) degrading the exiting nascent RNA transcript via endonuclease activity. The integrator complex is also involved in the 3'-end processing of the U7 snRNA, and also the spliceosomal snRNAs U1, U2, U4 and U5. Required for the normal expression of the Integrator complex component IntS1. The polypeptide is Integrator complex subunit 12 (Drosophila melanogaster (Fruit fly)).